Reading from the N-terminus, the 199-residue chain is Fe/S biogenesis protein NfuA (199 aa).

Positions 156 and 159 each coordinate [4Fe-4S] cluster.

Belongs to the NfuA family. As to quaternary structure, homodimer. It depends on [4Fe-4S] cluster as a cofactor.

In terms of biological role, involved in iron-sulfur cluster biogenesis. Binds a 4Fe-4S cluster, can transfer this cluster to apoproteins, and thereby intervenes in the maturation of Fe/S proteins. Could also act as a scaffold/chaperone for damaged Fe/S proteins. This Haemophilus ducreyi (strain 35000HP / ATCC 700724) protein is Fe/S biogenesis protein NfuA.